The following is a 58-amino-acid chain: Protein SHMOOSE (58 aa).

The segment at 27–58 is disordered; the sequence is FGATPNKSNNHAHYYNHPNPDFPNSPHPYHPR. Residues 35 to 45 show a composition bias toward low complexity; it reads NNHAHYYNHPN. Residues 46-58 show a composition bias toward pro residues; it reads PDFPNSPHPYHPR.

As to quaternary structure, interacts with IMMT/mitofilin. In terms of tissue distribution, detected in cerebrospinal fluid (at protein level).

Its subcellular location is the mitochondrion. It is found in the nucleus. In terms of biological role, increases neural cell metabolic activity and mitochondrial oxygen consumption rate. This is Protein SHMOOSE from Homo sapiens (Human).